The following is a 187-amino-acid chain: MKISGVDIRPGNILEYEGGLWRAAKIQHTQPGKGGAYMQVEMKNLIDGRKTNVRFRSAETVERVRLDTKDFQYLFADGDMLTFMDKETYEQISLPKDLLGDAVAFLQDGMDVVMELYEEKPISVQLPEQVEAEIVEADAVVKGQTASSSYKPAILDNGVRVMVPPHITAGTRIIVDVNTQEYVKRAD.

It belongs to the elongation factor P family.

The protein resides in the cytoplasm. It functions in the pathway protein biosynthesis; polypeptide chain elongation. Functionally, involved in peptide bond synthesis. Stimulates efficient translation and peptide-bond synthesis on native or reconstituted 70S ribosomes in vitro. Probably functions indirectly by altering the affinity of the ribosome for aminoacyl-tRNA, thus increasing their reactivity as acceptors for peptidyl transferase. The chain is Elongation factor P from Zymomonas mobilis subsp. mobilis (strain ATCC 31821 / ZM4 / CP4).